Here is a 195-residue protein sequence, read N- to C-terminus: Xanthine phosphoribosyltransferase (195 aa).

Positions 20 and 27 each coordinate xanthine. Alanine 128–alanine 132 serves as a coordination point for 5-phospho-alpha-D-ribose 1-diphosphate. Residue lysine 156 coordinates xanthine.

The protein belongs to the purine/pyrimidine phosphoribosyltransferase family. Xpt subfamily. Homodimer.

It localises to the cytoplasm. The catalysed reaction is XMP + diphosphate = xanthine + 5-phospho-alpha-D-ribose 1-diphosphate. It participates in purine metabolism; XMP biosynthesis via salvage pathway; XMP from xanthine: step 1/1. Its function is as follows. Converts the preformed base xanthine, a product of nucleic acid breakdown, to xanthosine 5'-monophosphate (XMP), so it can be reused for RNA or DNA synthesis. The sequence is that of Xanthine phosphoribosyltransferase from Latilactobacillus sakei subsp. sakei (strain 23K) (Lactobacillus sakei subsp. sakei).